The following is a 103-amino-acid chain: Large ribosomal subunit protein bL21 (103 aa).

It belongs to the bacterial ribosomal protein bL21 family. In terms of assembly, part of the 50S ribosomal subunit. Contacts protein L20.

In terms of biological role, this protein binds to 23S rRNA in the presence of protein L20. The chain is Large ribosomal subunit protein bL21 from Pseudomonas syringae pv. tomato (strain ATCC BAA-871 / DC3000).